Reading from the N-terminus, the 94-residue chain is Large ribosomal subunit protein bL25 (94 aa).

It belongs to the bacterial ribosomal protein bL25 family. As to quaternary structure, part of the 50S ribosomal subunit; part of the 5S rRNA/L5/L18/L25 subcomplex. Contacts the 5S rRNA. Binds to the 5S rRNA independently of L5 and L18.

Its function is as follows. This is one of the proteins that binds to the 5S RNA in the ribosome where it forms part of the central protuberance. The sequence is that of Large ribosomal subunit protein bL25 from Citrobacter koseri (strain ATCC BAA-895 / CDC 4225-83 / SGSC4696).